The following is a 903-amino-acid chain: uncharacterized protein (903 aa).

This is an uncharacterized protein from Gallid herpesvirus 2 (strain Chicken/Md5/ATCC VR-987) (GaHV-2).